The chain runs to 333 residues: Tetraacyldisaccharide 4'-kinase (333 aa).

Position 55 to 62 (55 to 62 (TAGGNGKT)) interacts with ATP.

Belongs to the LpxK family.

It carries out the reaction a lipid A disaccharide + ATP = a lipid IVA + ADP + H(+). It participates in glycolipid biosynthesis; lipid IV(A) biosynthesis; lipid IV(A) from (3R)-3-hydroxytetradecanoyl-[acyl-carrier-protein] and UDP-N-acetyl-alpha-D-glucosamine: step 6/6. Its function is as follows. Transfers the gamma-phosphate of ATP to the 4'-position of a tetraacyldisaccharide 1-phosphate intermediate (termed DS-1-P) to form tetraacyldisaccharide 1,4'-bis-phosphate (lipid IVA). In Pectobacterium carotovorum subsp. carotovorum (strain PC1), this protein is Tetraacyldisaccharide 4'-kinase.